A 267-amino-acid chain; its full sequence is Ribosomal RNA small subunit methyltransferase J (267 aa).

S-adenosyl-L-methionine contacts are provided by residues 133 to 134 (ER) and Asp187.

The protein belongs to the methyltransferase superfamily. RsmJ family.

It localises to the cytoplasm. It catalyses the reaction guanosine(1516) in 16S rRNA + S-adenosyl-L-methionine = N(2)-methylguanosine(1516) in 16S rRNA + S-adenosyl-L-homocysteine + H(+). Functionally, specifically methylates the guanosine in position 1516 of 16S rRNA. This is Ribosomal RNA small subunit methyltransferase J from Halorhodospira halophila (strain DSM 244 / SL1) (Ectothiorhodospira halophila (strain DSM 244 / SL1)).